Reading from the N-terminus, the 500-residue chain is NAD(P)H-quinone oxidoreductase chain 4, chloroplastic (500 aa).

The next 14 helical transmembrane spans lie at 4-24 (FPWLTILVVLPIFAGSLIFFL), 37-57 (MSICLLEFLLMTYAFCYHFQL), 87-107 (LGSILLTGFMTTLATLAAWPV), 113-130 (LFYFLMLAMYSGQIGLFS), 134-154 (LLLFFIMWELELIPVYLLLSM), 167-187 (FILYTAGGSIFFLIGVLGMGL), 211-231 (ILFYFGFLIAYAVKLPIIPLH), 242-262 (HYSTCMLLAGILLKMGAYGLI), 272-292 (AHYLFSPWLVIIGAMQIIYAA), 313-333 (MGFIIIGIGSITNIGLNGAIL), 334-354 (QILSHGFIGATLFFLAGTACD), 386-406 (LALPGMSGFVAELVVFFGLIT), 417-437 (LITFVMAIGMILTPIYLLSML), and 462-482 (LFLLICIFLPVIGIGIYPDFV).

The protein belongs to the complex I subunit 4 family.

The protein localises to the plastid. It localises to the chloroplast thylakoid membrane. It catalyses the reaction a plastoquinone + NADH + (n+1) H(+)(in) = a plastoquinol + NAD(+) + n H(+)(out). The catalysed reaction is a plastoquinone + NADPH + (n+1) H(+)(in) = a plastoquinol + NADP(+) + n H(+)(out). The sequence is that of NAD(P)H-quinone oxidoreductase chain 4, chloroplastic from Oryza nivara (Indian wild rice).